The sequence spans 86 residues: Neuropeptide precursor capa-1 (86 aa).

The first 19 residues, 1-19 (MLLWIVATLLIFSLPVSTA), serve as a signal peptide directing secretion.

As to expression, expressed in two pairs of neurons in the anterior part of the nervous system (at protein level).

In terms of biological role, encodes at least three neuropeptides: two of the periviscerokinin family (APHPSSALLVPYPRV-amide and LYMARV-amide) and one pyrokinin (AFFYTPRI-amide). Functionally, putative ligand for neuromedin U receptor homolog nmur-2. The polypeptide is Neuropeptide precursor capa-1 (Caenorhabditis elegans).